Reading from the N-terminus, the 304-residue chain is Acetyl-coenzyme A carboxylase carboxyl transferase subunit beta (304 aa).

The region spanning 29-298 (LWSKCESCGA…ASDVSPAAVP (270 aa)) is the CoA carboxyltransferase N-terminal domain. C33, C36, C52, and C55 together coordinate Zn(2+). The C4-type zinc finger occupies 33-55 (CESCGALTYTKDLRANQMVCLEC).

Belongs to the AccD/PCCB family. Acetyl-CoA carboxylase is a heterohexamer composed of biotin carboxyl carrier protein (AccB), biotin carboxylase (AccC) and two subunits each of ACCase subunit alpha (AccA) and ACCase subunit beta (AccD). Requires Zn(2+) as cofactor.

It is found in the cytoplasm. It carries out the reaction N(6)-carboxybiotinyl-L-lysyl-[protein] + acetyl-CoA = N(6)-biotinyl-L-lysyl-[protein] + malonyl-CoA. It participates in lipid metabolism; malonyl-CoA biosynthesis; malonyl-CoA from acetyl-CoA: step 1/1. Functionally, component of the acetyl coenzyme A carboxylase (ACC) complex. Biotin carboxylase (BC) catalyzes the carboxylation of biotin on its carrier protein (BCCP) and then the CO(2) group is transferred by the transcarboxylase to acetyl-CoA to form malonyl-CoA. This is Acetyl-coenzyme A carboxylase carboxyl transferase subunit beta from Acaryochloris marina (strain MBIC 11017).